Here is a 373-residue protein sequence, read N- to C-terminus: Velvet complex subunit RYP3 (373 aa).

The span at 1 to 10 shows a compositional bias: basic and acidic residues; sequence MYTLKQDRPH. 2 disordered regions span residues 1 to 26 and 344 to 373; these read MYTL…LQHG and RKDG…ENEG. The Velvet domain occupies 48–344; sequence VYEGRIYSLD…AFQGIKIPIR (297 aa). Positions 364–373 are enriched in acidic residues; the sequence is GEGEDWENEG.

This sequence belongs to the velvet family. VelB subfamily. As to quaternary structure, component of the heterotrimeric velvet complex composed of LAE1, VEL1 and VEL2; VEL1A acting as a bridging protein between LAE1 and VEL2. Forms a heterodimeric complex with VOS1; the formation of the VEL2-VOS1 complex is light-dependent.

The protein resides in the nucleus. It localises to the cytoplasm. Component of the velvet transcription factor complex that controls sexual/asexual developmental ratio in response to light, promoting sexual development in the darkness while stimulating asexual sporulation under illumination. The velvet complex acts as a global regulator for secondary metabolite gene expression. Component of the RYP2-RYP3 heterodimeric complex that plays a dual role in activating genes associated with spore maturation and repressing certain development-associated genes. The complex binds DNA through the DNA-binding domain of RYP2 that recognizes an 11-nucleotide consensus sequence 5'-CTGGCCGCGGC-3' consisting of two motifs in the promoters of key developmental regulatory genes. Required for viable spore production and regulation of sporulation in response to temperature, as well as for the switch to yeast-form in the presence of host cells. This chain is Velvet complex subunit RYP3 (RYP3), found in Ajellomyces capsulatus (Darling's disease fungus).